The following is a 534-amino-acid chain: Cytochrome P450 monooxygenase CYP4 (534 aa).

Residues 46 to 66 (TIIFCVLMSLVGYIVSRIIWG) form a helical membrane-spanning segment. The N-linked (GlcNAc...) asparagine glycan is linked to asparagine 220. Cysteine 477 lines the heme pocket. N-linked (GlcNAc...) asparagine glycosylation occurs at asparagine 515.

This sequence belongs to the cytochrome P450 family. Heme serves as cofactor.

It localises to the membrane. It functions in the pathway secondary metabolite biosynthesis. Its function is as follows. Cytochrome P450 monooxygenase; part of the gene cluster that mediates the biosynthesis of a tyrosine-derived cytochalasan acting as a fungal signal recognized by resistant rice plants and leads to avirulence in Pi33 resistant rice cultivars. The first step in the pathway is catalyzed by the hybrid PKS-NRPS ACE1, assisted by the enoyl reductase RAP1, that are responsible for fusion of the tyrosine precursor and the polyketide backbone. The polyketide synthase module (PKS) of ACE1 is responsible for the synthesis of the polyketide backbone and the downstream nonribosomal peptide synthetase (NRPS) amidates the carboxyl end of the polyketide with the tyrosine precursor. Because ACE1 lacks a designated enoylreductase (ER) domain, the required activity is provided the enoyl reductase RAP1. Reduction by the hydrolyase ORFZ, followed by dehydration and intra-molecular Diels-Alder cyclization by the Diels-Alderase ORF3 then yield the required isoindolone-fused macrocycle. A number of oxidative steps catalyzed by the tailoring enzymes identified within the cluster, including cytochrome P450 monooxygenases CYP1 to CYP4, the FAD-linked oxidoreductase OXR2 and the short-chain dehydrogenase/reductase OXR1, are further required to afford the final cytochalasans that confer avirulence and which have still to be identified. The monooxygenase CYP1 has been shown to be a site-selective C-18 hydroxylase whereas the function of CYP3 is the site-selective epoxidation of the C-6/C-7 olefin that is present in some intermediate compounds. Finally, SYN2 and RAP2 are not required for avirulence in Pi33 resistant rice cultivars. The protein is Cytochrome P450 monooxygenase CYP4 of Pyricularia oryzae (strain 70-15 / ATCC MYA-4617 / FGSC 8958) (Rice blast fungus).